The primary structure comprises 220 residues: Ribose-5-phosphate isomerase A (220 aa).

Substrate is bound by residues 25-28 (TGST), 80-83 (DGAD), and 93-96 (KGGG). Glu102 serves as the catalytic Proton acceptor. Residue Lys120 participates in substrate binding.

The protein belongs to the ribose 5-phosphate isomerase family. Homodimer.

It catalyses the reaction aldehydo-D-ribose 5-phosphate = D-ribulose 5-phosphate. The protein operates within carbohydrate degradation; pentose phosphate pathway; D-ribose 5-phosphate from D-ribulose 5-phosphate (non-oxidative stage): step 1/1. In terms of biological role, catalyzes the reversible conversion of ribose-5-phosphate to ribulose 5-phosphate. The chain is Ribose-5-phosphate isomerase A from Bacillus cereus (strain ATCC 10987 / NRS 248).